Here is a 375-residue protein sequence, read N- to C-terminus: tRNA-specific 2-thiouridylase MnmA (375 aa).

Residues 12–19 and methionine 38 each bind ATP; that span reads GMSGGVDS. The segment at 98-100 is interaction with target base in tRNA; the sequence is NPD. Cysteine 103 serves as the catalytic Nucleophile. A disulfide bridge connects residues cysteine 103 and cysteine 200. Glycine 127 serves as a coordination point for ATP. Residues 150 to 152 are interaction with tRNA; that stretch reads KDQ. Catalysis depends on cysteine 200, which acts as the Cysteine persulfide intermediate. The interval 312–313 is interaction with tRNA; sequence RY.

Belongs to the MnmA/TRMU family.

The protein localises to the cytoplasm. It carries out the reaction S-sulfanyl-L-cysteinyl-[protein] + uridine(34) in tRNA + AH2 + ATP = 2-thiouridine(34) in tRNA + L-cysteinyl-[protein] + A + AMP + diphosphate + H(+). Catalyzes the 2-thiolation of uridine at the wobble position (U34) of tRNA, leading to the formation of s(2)U34. This is tRNA-specific 2-thiouridylase MnmA from Lactobacillus delbrueckii subsp. bulgaricus (strain ATCC BAA-365 / Lb-18).